Here is a 168-residue protein sequence, read N- to C-terminus: ATP synthase subunit b (168 aa).

Residues 11 to 31 traverse the membrane as a helical segment; it reads NTVLGNIIVVSGAFIILLVLL.

The protein belongs to the ATPase B chain family. F-type ATPases have 2 components, F(1) - the catalytic core - and F(0) - the membrane proton channel. F(1) has five subunits: alpha(3), beta(3), gamma(1), delta(1), epsilon(1). F(0) has three main subunits: a(1), b(2) and c(10-14). The alpha and beta chains form an alternating ring which encloses part of the gamma chain. F(1) is attached to F(0) by a central stalk formed by the gamma and epsilon chains, while a peripheral stalk is formed by the delta and b chains.

The protein resides in the cell membrane. In terms of biological role, f(1)F(0) ATP synthase produces ATP from ADP in the presence of a proton or sodium gradient. F-type ATPases consist of two structural domains, F(1) containing the extramembraneous catalytic core and F(0) containing the membrane proton channel, linked together by a central stalk and a peripheral stalk. During catalysis, ATP synthesis in the catalytic domain of F(1) is coupled via a rotary mechanism of the central stalk subunits to proton translocation. Its function is as follows. Component of the F(0) channel, it forms part of the peripheral stalk, linking F(1) to F(0). This Lactococcus lactis subsp. lactis (strain IL1403) (Streptococcus lactis) protein is ATP synthase subunit b.